Reading from the N-terminus, the 249-residue chain is Protein YIP5 (249 aa).

5 helical membrane passes run 87-107, 131-151, 164-184, 188-208, and 228-248; these read LYGPFWITTTVIQALFFSNSI, ASIIYGYTTIIAVLLWGILVW, LYGYANIVWLPVSLATPPFGL, LASHIVKYVLTGIGLLISIVF, and LLFGIIVFHCLLALSLQLIFF.

Belongs to the YIP1 family. In terms of assembly, interacts with the YIP1 family members yip1 and yip4, and several Rab GTPases. The C-terminal cysteines in the Rab GTPase ypt2 are essential for the interaction. Interacts with snx3.

The protein localises to the membrane. Possible role in vesicle-mediated transport. May be involved in proper membrane localization of Rab GTPases. This Schizosaccharomyces pombe (strain 972 / ATCC 24843) (Fission yeast) protein is Protein YIP5.